The primary structure comprises 209 residues: Claudin-4 (209 aa).

Topologically, residues 1-9 are cytoplasmic; it reads MASMGLQVT. Residues 1-103 form an interaction with EPHA2 region; it reads MASMGLQVTG…GVLLSVVGGK (103 aa). A helical transmembrane segment spans residues 10–30; that stretch reads GIALAVLGWLAVMLCCALPMW. The Extracellular segment spans residues 31-81; that stretch reads RVTAFIGSNIVTSQTIWEGLWMNCVVQSTGQMQCKVYDSLLALPQDLQAAR. A disulfide bond links Cys54 and Cys64. A helical transmembrane segment spans residues 82 to 102; it reads ALVIISIIVAALGVLLSVVGG. The Cytoplasmic portion of the chain corresponds to 103-117; the sequence is KCTNCLEDESAKAKT. Residues 118 to 138 traverse the membrane as a helical segment; that stretch reads MIVAGVVFLLAGLLVIVPVSW. At 139–160 the chain is on the extracellular side; that stretch reads TAHNIIQDFYNPLVASGQKREM. Residues 161–181 form a helical membrane-spanning segment; it reads GASLYVGWAASGLLLLGGGLL. Residues 182 to 209 lie on the Cytoplasmic side of the membrane; sequence CCNCPPRTDKPYSAKYSAARSAAASNYV. Tyr208 bears the Phosphotyrosine; by EPHA2 mark. Residues 208–209 are interactions with TJP1, TJP2 and TJP3; the sequence is YV.

It belongs to the claudin family. Interacts with EPHA2; phosphorylates CLDN4 and may regulate tight junctions. Directly interacts with TJP1/ZO-1, TJP2/ZO-2 and TJP3/ZO-3. Interacts with CLDN1. Interacts with CLDN8. Phosphorylated. Phosphorylation by EPHA2 is stimulated by EFNA1 and alters interaction with TJP1.

The protein resides in the cell junction. It localises to the tight junction. Its subcellular location is the cell membrane. In terms of biological role, channel-forming tight junction protein that mediates paracellular chloride transport in the kidney. Plays a critical role in the paracellular reabsorption of filtered chloride in the kidney collecting ducts. Claudins play a major role in tight junction-specific obliteration of the intercellular space, through calcium-independent cell-adhesion activity. In Chlorocebus aethiops (Green monkey), this protein is Claudin-4 (CLDN4).